The primary structure comprises 357 residues: Isoflavone 7-O-methyltransferase (357 aa).

S-adenosyl-L-methionine contacts are provided by residues 200-203, Asp-224, 224-225, 244-245, and Lys-258; these read VGGG, DR, and DM. The active-site Proton acceptor is the His-262.

The protein belongs to the class I-like SAM-binding methyltransferase superfamily. Cation-independent O-methyltransferase family. COMT subfamily.

The catalysed reaction is a 7-hydroxyisoflavone + S-adenosyl-L-methionine = a 7-methoxyisoflavone + S-adenosyl-L-homocysteine + H(+). Functionally, 7-O-methyltransferase involved in the biosynthesis of isoformononetin. Can use daidzein as substrate, but not medicarpin or 2,7,4'-trihydroxyisoflavanone. In Glycyrrhiza echinata (Licorice), this protein is Isoflavone 7-O-methyltransferase (D7OMT).